A 125-amino-acid chain; its full sequence is Large ribosomal subunit protein bL12 (125 aa).

Belongs to the bacterial ribosomal protein bL12 family. As to quaternary structure, homodimer. Part of the ribosomal stalk of the 50S ribosomal subunit. Forms a multimeric L10(L12)X complex, where L10 forms an elongated spine to which 2 to 4 L12 dimers bind in a sequential fashion. Binds GTP-bound translation factors.

In terms of biological role, forms part of the ribosomal stalk which helps the ribosome interact with GTP-bound translation factors. Is thus essential for accurate translation. The chain is Large ribosomal subunit protein bL12 from Rickettsia africae (strain ESF-5).